We begin with the raw amino-acid sequence, 424 residues long: Putative glutamate--cysteine ligase 2-3 (424 aa).

2 disordered regions span residues 1 to 20 (MQMA…PVLV) and 405 to 424 (GAAA…VRRP).

The protein belongs to the glutamate--cysteine ligase type 2 family. YbdK subfamily.

The enzyme catalyses L-cysteine + L-glutamate + ATP = gamma-L-glutamyl-L-cysteine + ADP + phosphate + H(+). In terms of biological role, ATP-dependent carboxylate-amine ligase which exhibits weak glutamate--cysteine ligase activity. This chain is Putative glutamate--cysteine ligase 2-3, found in Paenarthrobacter aurescens (strain TC1).